Consider the following 98-residue polypeptide: Putative pterin-4-alpha-carbinolamine dehydratase (98 aa).

The protein belongs to the pterin-4-alpha-carbinolamine dehydratase family.

It carries out the reaction (4aS,6R)-4a-hydroxy-L-erythro-5,6,7,8-tetrahydrobiopterin = (6R)-L-erythro-6,7-dihydrobiopterin + H2O. The polypeptide is Putative pterin-4-alpha-carbinolamine dehydratase (Parasynechococcus marenigrum (strain WH8102)).